Here is a 219-residue protein sequence, read N- to C-terminus: 2-C-methyl-D-erythritol 4-phosphate cytidylyltransferase (219 aa).

It belongs to the IspD/TarI cytidylyltransferase family. IspD subfamily.

The catalysed reaction is 2-C-methyl-D-erythritol 4-phosphate + CTP + H(+) = 4-CDP-2-C-methyl-D-erythritol + diphosphate. It participates in isoprenoid biosynthesis; isopentenyl diphosphate biosynthesis via DXP pathway; isopentenyl diphosphate from 1-deoxy-D-xylulose 5-phosphate: step 2/6. In terms of biological role, catalyzes the formation of 4-diphosphocytidyl-2-C-methyl-D-erythritol from CTP and 2-C-methyl-D-erythritol 4-phosphate (MEP). In Bacteroides fragilis (strain ATCC 25285 / DSM 2151 / CCUG 4856 / JCM 11019 / LMG 10263 / NCTC 9343 / Onslow / VPI 2553 / EN-2), this protein is 2-C-methyl-D-erythritol 4-phosphate cytidylyltransferase.